A 439-amino-acid chain; its full sequence is DNA primase DnaG (439 aa).

Residues 169–243 (DSIIVVEGRA…DIDYVARAPY (75 aa)) form the Toprim domain. Mg(2+)-binding residues include Glu-175, Asp-217, and Asp-219.

This sequence belongs to the archaeal DnaG primase family. In terms of assembly, forms a ternary complex with MCM helicase and DNA. The cofactor is Mg(2+).

The enzyme catalyses ssDNA + n NTP = ssDNA/pppN(pN)n-1 hybrid + (n-1) diphosphate.. Its function is as follows. RNA polymerase that catalyzes the synthesis of short RNA molecules used as primers for DNA polymerase during DNA replication. The chain is DNA primase DnaG from Methanococcus maripaludis (strain C7 / ATCC BAA-1331).